The following is a 374-amino-acid chain: MYLENLVLHDFRNYADLTINFSQGVNVLLGENAQGKTNLLEAIYVLALTRSHRTANDKELIRWQTTTATLQGRLHKSTGAVPLELELGRRGKRAKVNHLEQAKLSQYVGNLNVIVFAPEDLSIVKGAPAVRRRFMDMEFGQMSPKYLYNLSQYRTILKQRNQYLRQLNRQQAKDKVYLGVLSDQLAAFGAEIIHKRLQLLQQLEKWAQAVHSEITQEQEQLTFHYVTQVPTADQTSVDHIYQTLQALYQQQQAKEIFQGTTLLGPHRDDLQFGVNGKNVQTFGSQGQQRTTALSVKLAEIDLMKAETGEYPVLLLDDVLSELDAARQTHLLTAIQDKVQTFLTTPSLDGVARKLINAPKVFEVSHGTLHEEEPH.

30–37 is an ATP binding site; the sequence is GENAQGKT.

Belongs to the RecF family.

It localises to the cytoplasm. Its function is as follows. The RecF protein is involved in DNA metabolism; it is required for DNA replication and normal SOS inducibility. RecF binds preferentially to single-stranded, linear DNA. It also seems to bind ATP. The protein is DNA replication and repair protein RecF of Lactiplantibacillus plantarum (strain ATCC BAA-793 / NCIMB 8826 / WCFS1) (Lactobacillus plantarum).